We begin with the raw amino-acid sequence, 61 residues long: Small ribosomal subunit protein uS14B (61 aa).

Residues Cys24, Cys27, Cys40, and Cys43 each coordinate Zn(2+).

The protein belongs to the universal ribosomal protein uS14 family. Zinc-binding uS14 subfamily. In terms of assembly, part of the 30S ribosomal subunit. Contacts proteins S3 and S10. The cofactor is Zn(2+).

Binds 16S rRNA, required for the assembly of 30S particles and may also be responsible for determining the conformation of the 16S rRNA at the A site. This chain is Small ribosomal subunit protein uS14B, found in Saccharopolyspora erythraea (strain ATCC 11635 / DSM 40517 / JCM 4748 / NBRC 13426 / NCIMB 8594 / NRRL 2338).